Here is a 342-residue protein sequence, read N- to C-terminus: Phenylalanine--tRNA ligase alpha subunit (342 aa).

Glu-257 serves as a coordination point for Mg(2+).

Belongs to the class-II aminoacyl-tRNA synthetase family. Phe-tRNA synthetase alpha subunit type 1 subfamily. Tetramer of two alpha and two beta subunits. Mg(2+) serves as cofactor.

The protein resides in the cytoplasm. The enzyme catalyses tRNA(Phe) + L-phenylalanine + ATP = L-phenylalanyl-tRNA(Phe) + AMP + diphosphate + H(+). This Chlamydia trachomatis serovar A (strain ATCC VR-571B / DSM 19440 / HAR-13) protein is Phenylalanine--tRNA ligase alpha subunit.